The sequence spans 474 residues: Bifunctional protein HldE (474 aa).

Residues 1-318 (MKLSMPRFDQ…RAIQREEGSE (318 aa)) form a ribokinase region. 194-197 (NLSE) is an ATP binding site. Asp263 is an active-site residue. Residues 343 to 474 (FTNGCFDILH…AIVEKIRGQG (132 aa)) form a cytidylyltransferase region.

In the N-terminal section; belongs to the carbohydrate kinase PfkB family. It in the C-terminal section; belongs to the cytidylyltransferase family. In terms of assembly, homodimer.

The catalysed reaction is D-glycero-beta-D-manno-heptose 7-phosphate + ATP = D-glycero-beta-D-manno-heptose 1,7-bisphosphate + ADP + H(+). It catalyses the reaction D-glycero-beta-D-manno-heptose 1-phosphate + ATP + H(+) = ADP-D-glycero-beta-D-manno-heptose + diphosphate. The protein operates within nucleotide-sugar biosynthesis; ADP-L-glycero-beta-D-manno-heptose biosynthesis; ADP-L-glycero-beta-D-manno-heptose from D-glycero-beta-D-manno-heptose 7-phosphate: step 1/4. It functions in the pathway nucleotide-sugar biosynthesis; ADP-L-glycero-beta-D-manno-heptose biosynthesis; ADP-L-glycero-beta-D-manno-heptose from D-glycero-beta-D-manno-heptose 7-phosphate: step 3/4. Its function is as follows. Catalyzes the phosphorylation of D-glycero-D-manno-heptose 7-phosphate at the C-1 position to selectively form D-glycero-beta-D-manno-heptose-1,7-bisphosphate. Catalyzes the ADP transfer from ATP to D-glycero-beta-D-manno-heptose 1-phosphate, yielding ADP-D-glycero-beta-D-manno-heptose. The chain is Bifunctional protein HldE from Pseudomonas syringae pv. syringae (strain B728a).